A 235-amino-acid chain; its full sequence is Aspartate/glutamate leucyltransferase (235 aa).

The protein belongs to the R-transferase family. Bpt subfamily.

Its subcellular location is the cytoplasm. The catalysed reaction is N-terminal L-glutamyl-[protein] + L-leucyl-tRNA(Leu) = N-terminal L-leucyl-L-glutamyl-[protein] + tRNA(Leu) + H(+). The enzyme catalyses N-terminal L-aspartyl-[protein] + L-leucyl-tRNA(Leu) = N-terminal L-leucyl-L-aspartyl-[protein] + tRNA(Leu) + H(+). Functions in the N-end rule pathway of protein degradation where it conjugates Leu from its aminoacyl-tRNA to the N-termini of proteins containing an N-terminal aspartate or glutamate. The chain is Aspartate/glutamate leucyltransferase from Pseudomonas fluorescens (strain SBW25).